The sequence spans 110 residues: Protein YcgL (110 aa).

The region spanning 14 to 98 (MFCVIYRSSK…PPEDLLKQHL (85 aa)) is the YcgL domain.

The sequence is that of Protein YcgL from Salmonella arizonae (strain ATCC BAA-731 / CDC346-86 / RSK2980).